A 130-amino-acid chain; its full sequence is Small ribosomal subunit protein uS8 (130 aa).

This sequence belongs to the universal ribosomal protein uS8 family. In terms of assembly, part of the 30S ribosomal subunit.

Its function is as follows. One of the primary rRNA binding proteins, it binds directly to 16S rRNA central domain where it helps coordinate assembly of the platform of the 30S subunit. This is Small ribosomal subunit protein uS8 from Thermococcus sibiricus (strain DSM 12597 / MM 739).